The following is a 428-amino-acid chain: Tyrosine--tRNA ligase (428 aa).

Tyr36 contacts L-tyrosine. The 'HIGH' region signature appears at 41–50 (PTAPSLHAGH). The L-tyrosine site is built by Tyr171 and Gln175. Positions 231 to 235 (KFGKS) match the 'KMSKS' region motif. ATP is bound at residue Lys234. In terms of domain architecture, S4 RNA-binding spans 359–416 (DSIVDLLVETGLAASKGAARRNVAEGGVYVNNIRIESDEWIPQHSDFLHERWLVLRRG).

It belongs to the class-I aminoacyl-tRNA synthetase family. TyrS type 1 subfamily. As to quaternary structure, homodimer.

The protein resides in the cytoplasm. The enzyme catalyses tRNA(Tyr) + L-tyrosine + ATP = L-tyrosyl-tRNA(Tyr) + AMP + diphosphate + H(+). Catalyzes the attachment of tyrosine to tRNA(Tyr) in a two-step reaction: tyrosine is first activated by ATP to form Tyr-AMP and then transferred to the acceptor end of tRNA(Tyr). The sequence is that of Tyrosine--tRNA ligase from Mycolicibacterium fortuitum (Mycobacterium fortuitum).